Here is a 1248-residue protein sequence, read N- to C-terminus: Kinesin-like protein KIN-14I (1248 aa).

The MyTH4 domain maps to 88-244; that stretch reads FQKDPIPTSL…PAREEIEALL (157 aa). The FERM domain maps to 249–563; that stretch reads LTTIVFFLDE…HINDVMLRRY (315 aa). A coiled-coil region spans residues 586 to 659; sequence NIEIYEKRVQ…LDKLKSLCDE (74 aa). Residues 675–704 form a disordered region; it reads ETRLKSGQGQESSNRTGVSGNHFERDTLPT. Polar residues predominate over residues 679–693; sequence KSGQGQESSNRTGVS. Residues 708–799 adopt a coiled-coil conformation; sequence VNNSIEMLAK…TRSLNVTEST (92 aa). Positions 872–1193 constitute a Kinesin motor domain; that stretch reads KIRVFCRLRP…LMYASRVRCI (322 aa). 953–960 is a binding site for ATP; it reads GQTGSGKT. The tract at residues 1201–1223 is calmodulin-binding; the sequence is VAPKEIMRLKKLIAYWKEQAGKR. Residues 1220–1248 form a disordered region; sequence AGKRSEDDDLEEIQEERTPKEKADNRLTS. Over residues 1234–1248 the composition is skewed to basic and acidic residues; sequence EERTPKEKADNRLTS.

It belongs to the TRAFAC class myosin-kinesin ATPase superfamily. Kinesin family. KIN-14 subfamily. In terms of assembly, binds microtubules via its N-terminus containing the MyTH4 domain and binds F-actin via its FERM domain. Binding to calmodulin inhibits microtubule binding activity.

It localises to the cytoplasm. The protein localises to the cytoskeleton. In terms of biological role, minus-end microtubule-dependent motor protein involved in the regulation of cell division. In Oryza sativa subsp. japonica (Rice), this protein is Kinesin-like protein KIN-14I.